The primary structure comprises 782 residues: Transcription factor SOX-30 (782 aa).

3 disordered regions span residues 1–37 (MERARPEPPPPPPPPPRQPPRPTPPRPLRPAPPAQPV), 95–117 (LPPGGPGVPPAPDEGAAAAAAAA), and 139–226 (PPQS…DALK). Composition is skewed to pro residues over residues 7 to 35 (EPPPPPPPPPRQPPRPTPPRPLRPAPPAQ) and 97 to 106 (PGGPGVPPAP). A compositionally biased stretch (basic and acidic residues) spans 203-226 (LDGRRSDEKKAKLEAEEAPRDALK). The HMG box DNA-binding region spans 366-434 (VKRPMNAFMV…KHREEFPGWV (69 aa)). Disordered stretches follow at residues 501–604 (PTPA…STCP), 704–724 (YPDEHTHSEDSRSCESMDGPP), and 756–782 (ASAPSGVQQVNVTDSDEEEEEKVLRNL). Residues 512 to 522 (TLFQPSVSSTG) show a composition bias toward polar residues. Residues 525-538 (AVPPPSLTPRPSLP) are compositionally biased toward pro residues. Positions 555 to 574 (SGSSRSVKRSTPGSLESTTR) are enriched in polar residues. A compositionally biased stretch (basic and acidic residues) spans 704-718 (YPDEHTHSEDSRSCE).

Interacts with CTNNB1, competitively inhibiting CTNNB1-TCF7L2/TCF4 interaction. Expressed in the lung (at protein level). Expressed in testes (at protein level). Expressed in preleptotene spermatocytes, round spermatids, and elongated spermatids in the testis (at protein level). Expressed in pachytene spermatocytes during stages 3 to 8 of spermatogenesis (at protein level). Increased expression in diplotene spermatocytes at stage 9-11 and in metaphase spermatocytes or secondary spermatocytes at stage 12. Expressed in ovaries.

It localises to the nucleus. The protein localises to the cytoplasm. Acts both as a transcriptional activator and a repressor. Binds to the DNA sequence 5'-ACAAT-3' and shows a preference for guanine residues surrounding this core motif. Binds to its own promoter and activates its own transcription. Required to activate the expression of postmeiotic genes involved in spermiogenesis. Binds to the promoter region of CTNNB1 and represses its transcription which leads to inhibition of Wnt signaling. Also inhibits Wnt signaling by binding to the CTNNB1 protein, preventing interaction of CTNNB1 with TCF7L2/TCF4. The sequence is that of Transcription factor SOX-30 (Sox30) from Mus musculus (Mouse).